The sequence spans 530 residues: Phosphoenolpyruvate carboxykinase (ATP) (530 aa).

Arg60, Tyr195, and Lys201 together coordinate substrate. ATP is bound by residues Lys201, His221, and 237–245 (GLSGTGKTT). Lys201 and His221 together coordinate Mn(2+). Mn(2+) is bound at residue Asp258. ATP is bound by residues Glu286, Arg324, and Ser449. Arg324 contacts substrate.

Belongs to the phosphoenolpyruvate carboxykinase (ATP) family. Mn(2+) is required as a cofactor.

Its subcellular location is the cytoplasm. It carries out the reaction oxaloacetate + ATP = phosphoenolpyruvate + ADP + CO2. Its pathway is carbohydrate biosynthesis; gluconeogenesis. Involved in the gluconeogenesis. Catalyzes the conversion of oxaloacetate (OAA) to phosphoenolpyruvate (PEP) through direct phosphoryl transfer between the nucleoside triphosphate and OAA. The protein is Phosphoenolpyruvate carboxykinase (ATP) of Geobacter metallireducens (strain ATCC 53774 / DSM 7210 / GS-15).